The primary structure comprises 181 residues: Probable nicotinate-nucleotide adenylyltransferase (181 aa).

The protein belongs to the NadD family.

It catalyses the reaction nicotinate beta-D-ribonucleotide + ATP + H(+) = deamido-NAD(+) + diphosphate. It participates in cofactor biosynthesis; NAD(+) biosynthesis; deamido-NAD(+) from nicotinate D-ribonucleotide: step 1/1. In terms of biological role, catalyzes the reversible adenylation of nicotinate mononucleotide (NaMN) to nicotinic acid adenine dinucleotide (NaAD). In Campylobacter fetus subsp. fetus (strain 82-40), this protein is Probable nicotinate-nucleotide adenylyltransferase.